Reading from the N-terminus, the 141-residue chain is HTH-type transcriptional repressor NsrR (141 aa).

Residues 2-129 (QLTSFTDYGL…DNYTLADLVE (128 aa)) form the HTH rrf2-type domain. A DNA-binding region (H-T-H motif) is located at residues 28–51 (ISEVTEVYGVSRNHMVKIINQLSR). [2Fe-2S] cluster contacts are provided by cysteine 91, cysteine 96, and cysteine 102.

[2Fe-2S] cluster serves as cofactor.

In terms of biological role, nitric oxide-sensitive repressor of genes involved in protecting the cell against nitrosative stress. May require iron for activity. This is HTH-type transcriptional repressor NsrR from Klebsiella pneumoniae subsp. pneumoniae (strain ATCC 700721 / MGH 78578).